Here is a 158-residue protein sequence, read N- to C-terminus: SsrA-binding protein (158 aa).

The interval 135–158 (DKRKTLKDRDWERDKQRGFKKDLD) is disordered. The span at 141-158 (KDRDWERDKQRGFKKDLD) shows a compositional bias: basic and acidic residues.

It belongs to the SmpB family.

Its subcellular location is the cytoplasm. In terms of biological role, required for rescue of stalled ribosomes mediated by trans-translation. Binds to transfer-messenger RNA (tmRNA), required for stable association of tmRNA with ribosomes. tmRNA and SmpB together mimic tRNA shape, replacing the anticodon stem-loop with SmpB. tmRNA is encoded by the ssrA gene; the 2 termini fold to resemble tRNA(Ala) and it encodes a 'tag peptide', a short internal open reading frame. During trans-translation Ala-aminoacylated tmRNA acts like a tRNA, entering the A-site of stalled ribosomes, displacing the stalled mRNA. The ribosome then switches to translate the ORF on the tmRNA; the nascent peptide is terminated with the 'tag peptide' encoded by the tmRNA and targeted for degradation. The ribosome is freed to recommence translation, which seems to be the essential function of trans-translation. This chain is SsrA-binding protein, found in Psychrobacter arcticus (strain DSM 17307 / VKM B-2377 / 273-4).